The following is an 860-amino-acid chain: Alanine--tRNA ligase (860 aa).

The Zn(2+) site is built by His-563, His-567, Cys-665, and His-669.

This sequence belongs to the class-II aminoacyl-tRNA synthetase family. Zn(2+) serves as cofactor.

It is found in the cytoplasm. The catalysed reaction is tRNA(Ala) + L-alanine + ATP = L-alanyl-tRNA(Ala) + AMP + diphosphate. Catalyzes the attachment of alanine to tRNA(Ala) in a two-step reaction: alanine is first activated by ATP to form Ala-AMP and then transferred to the acceptor end of tRNA(Ala). Also edits incorrectly charged Ser-tRNA(Ala) and Gly-tRNA(Ala) via its editing domain. The protein is Alanine--tRNA ligase of Vibrio cholerae serotype O1 (strain ATCC 39315 / El Tor Inaba N16961).